The chain runs to 277 residues: Diaminopimelate epimerase (277 aa).

Residues Asn13, Gln46, and Asn65 each contribute to the substrate site. Cys74 functions as the Proton donor in the catalytic mechanism. Substrate-binding positions include 75-76 (GN), Asn158, Asn191, and 209-210 (ER). Catalysis depends on Cys218, which acts as the Proton acceptor. Residue 219–220 (GT) coordinates substrate.

Belongs to the diaminopimelate epimerase family. As to quaternary structure, homodimer.

It localises to the cytoplasm. The catalysed reaction is (2S,6S)-2,6-diaminopimelate = meso-2,6-diaminopimelate. It functions in the pathway amino-acid biosynthesis; L-lysine biosynthesis via DAP pathway; DL-2,6-diaminopimelate from LL-2,6-diaminopimelate: step 1/1. Catalyzes the stereoinversion of LL-2,6-diaminopimelate (L,L-DAP) to meso-diaminopimelate (meso-DAP), a precursor of L-lysine and an essential component of the bacterial peptidoglycan. The protein is Diaminopimelate epimerase of Nitrosospira multiformis (strain ATCC 25196 / NCIMB 11849 / C 71).